Here is a 273-residue protein sequence, read N- to C-terminus: Tryptophan synthase alpha chain (273 aa).

Catalysis depends on proton acceptor residues E49 and D60.

It belongs to the TrpA family. In terms of assembly, tetramer of two alpha and two beta chains.

The enzyme catalyses (1S,2R)-1-C-(indol-3-yl)glycerol 3-phosphate + L-serine = D-glyceraldehyde 3-phosphate + L-tryptophan + H2O. The protein operates within amino-acid biosynthesis; L-tryptophan biosynthesis; L-tryptophan from chorismate: step 5/5. Functionally, the alpha subunit is responsible for the aldol cleavage of indoleglycerol phosphate to indole and glyceraldehyde 3-phosphate. In Thiobacillus denitrificans (strain ATCC 25259 / T1), this protein is Tryptophan synthase alpha chain.